The chain runs to 428 residues: Trigger factor (428 aa).

A PPIase FKBP-type domain is found at 163-248 (GDIVDIDFEG…VNDVKVKELP (86 aa)).

The protein belongs to the FKBP-type PPIase family. Tig subfamily.

The protein localises to the cytoplasm. The catalysed reaction is [protein]-peptidylproline (omega=180) = [protein]-peptidylproline (omega=0). Functionally, involved in protein export. Acts as a chaperone by maintaining the newly synthesized protein in an open conformation. Functions as a peptidyl-prolyl cis-trans isomerase. The protein is Trigger factor of Acetivibrio thermocellus (strain ATCC 27405 / DSM 1237 / JCM 9322 / NBRC 103400 / NCIMB 10682 / NRRL B-4536 / VPI 7372) (Clostridium thermocellum).